Reading from the N-terminus, the 396-residue chain is Elongation factor Tu (396 aa).

One can recognise a tr-type G domain in the interval lysine 10–threonine 206. A G1 region spans residues glycine 19–threonine 26. Position 19-26 (glycine 19–threonine 26) interacts with GTP. Threonine 26 is a Mg(2+) binding site. Positions glycine 60 to serine 64 are G2. The segment at aspartate 81–glycine 84 is G3. GTP is bound by residues aspartate 81–histidine 85 and asparagine 136–aspartate 139. The G4 stretch occupies residues asparagine 136 to aspartate 139. The G5 stretch occupies residues serine 174–arginine 176.

The protein belongs to the TRAFAC class translation factor GTPase superfamily. Classic translation factor GTPase family. EF-Tu/EF-1A subfamily. As to quaternary structure, monomer.

It localises to the cytoplasm. It catalyses the reaction GTP + H2O = GDP + phosphate + H(+). GTP hydrolase that promotes the GTP-dependent binding of aminoacyl-tRNA to the A-site of ribosomes during protein biosynthesis. The polypeptide is Elongation factor Tu (Xanthomonas oryzae pv. oryzae (strain MAFF 311018)).